We begin with the raw amino-acid sequence, 43 residues long: Potassium channel toxin gamma-KTx 4.4 (43 aa).

4 disulfide bridges follow: Cys5/Cys23, Cys11/Cys34, Cys20/Cys39, and Cys24/Cys41.

It belongs to the ergtoxin family. Gamma-KTx 4 subfamily. As to expression, expressed by the venom gland.

It is found in the secreted. Functionally, reversibly blocks Kv11/ERG potassium channels. The protein is Potassium channel toxin gamma-KTx 4.4 of Centruroides exilicauda (Bark scorpion).